Reading from the N-terminus, the 242-residue chain is Purine nucleoside phosphorylase SCO2081 (242 aa).

Histidine 68, cysteine 106, and histidine 123 together coordinate Zn(2+).

This sequence belongs to the purine nucleoside phosphorylase YfiH/LACC1 family. Homodimer. It depends on Cu(2+) as a cofactor. Zn(2+) is required as a cofactor.

The catalysed reaction is adenosine + phosphate = alpha-D-ribose 1-phosphate + adenine. The enzyme catalyses S-methyl-5'-thioadenosine + phosphate = 5-(methylsulfanyl)-alpha-D-ribose 1-phosphate + adenine. It carries out the reaction inosine + phosphate = alpha-D-ribose 1-phosphate + hypoxanthine. It catalyses the reaction adenosine + H2O + H(+) = inosine + NH4(+). Functionally, purine nucleoside enzyme that catalyzes the phosphorolysis of adenosine and inosine nucleosides, yielding D-ribose 1-phosphate and the respective free bases, adenine and hypoxanthine. Also catalyzes the phosphorolysis of S-methyl-5'-thioadenosine into adenine and S-methyl-5-thio-alpha-D-ribose 1-phosphate. Also has adenosine deaminase activity. The sequence is that of Purine nucleoside phosphorylase SCO2081 from Streptomyces coelicolor (strain ATCC BAA-471 / A3(2) / M145).